The chain runs to 453 residues: tRNA modification GTPase MnmE (453 aa).

(6S)-5-formyl-5,6,7,8-tetrahydrofolate-binding residues include R22, E79, and K119. The TrmE-type G domain occupies 215 to 376; it reads GMKVVIAGRP…LKQHLKSLMG (162 aa). N225 is a K(+) binding site. GTP contacts are provided by residues 225 to 230, 244 to 250, 269 to 272, and 334 to 337; these read NAGKSS, TDIAGTT, DTAG, and NKAD. A Mg(2+)-binding site is contributed by S229. Residues T244, I246, and T249 each coordinate K(+). T250 contributes to the Mg(2+) binding site. (6S)-5-formyl-5,6,7,8-tetrahydrofolate is bound at residue K453.

This sequence belongs to the TRAFAC class TrmE-Era-EngA-EngB-Septin-like GTPase superfamily. TrmE GTPase family. Homodimer. Heterotetramer of two MnmE and two MnmG subunits. Requires K(+) as cofactor.

Its subcellular location is the cytoplasm. Exhibits a very high intrinsic GTPase hydrolysis rate. Involved in the addition of a carboxymethylaminomethyl (cmnm) group at the wobble position (U34) of certain tRNAs, forming tRNA-cmnm(5)s(2)U34. In Shewanella amazonensis (strain ATCC BAA-1098 / SB2B), this protein is tRNA modification GTPase MnmE.